A 413-amino-acid chain; its full sequence is Gamma-glutamyl phosphate reductase (413 aa).

Belongs to the gamma-glutamyl phosphate reductase family.

It is found in the cytoplasm. It carries out the reaction L-glutamate 5-semialdehyde + phosphate + NADP(+) = L-glutamyl 5-phosphate + NADPH + H(+). It participates in amino-acid biosynthesis; L-proline biosynthesis; L-glutamate 5-semialdehyde from L-glutamate: step 2/2. Catalyzes the NADPH-dependent reduction of L-glutamate 5-phosphate into L-glutamate 5-semialdehyde and phosphate. The product spontaneously undergoes cyclization to form 1-pyrroline-5-carboxylate. The chain is Gamma-glutamyl phosphate reductase from Salinispora arenicola (strain CNS-205).